Here is a 1077-residue protein sequence, read N- to C-terminus: FKBP12-associated protein 1 homolog (1077 aa).

The disordered stretch occupies residues 1–173 (METSKNPSDL…MPKNSKEIKK (173 aa)). Residues 15 to 29 (ANVKKNRRRFQKSQK) show a composition bias toward basic residues. S33 carries the phosphoserine modification. The segment covering 52-64 (EEVKTSLKEDSSK) has biased composition (basic and acidic residues). Residues 76–87 (PTSSVQLNVSKN) are compositionally biased toward polar residues. Residues 100–116 (SSKDEELRKHAKGEGKR) are compositionally biased toward basic and acidic residues. Over residues 136-149 (SSNSSQETSSSKGS) the composition is skewed to low complexity. Positions 153–173 (KSERSREAKSRMPKNSKEIKK) are enriched in basic and acidic residues. An RING-type; atypical zinc finger spans residues 197–247 (CSVCTDTINPSTSIWSCGTCYHVFHLSCIRKWCKNSIEQRNEDAWRCPYCQ). NF-X1-type zinc fingers lie at residues 290–308 (CEHP…PCTA), 348–367 (CGEH…ACFE), 420–441 (CGLH…HCPF), 485–503 (CGHR…TCSE), 541–558 (CGRH…SKAQ), 595–614 (CGNH…RCLE), 708–729 (CKTH…SCKK), and 738–760 (CEHV…PCKA). The 63-residue stretch at 835–897 (SDFADEVESL…KRNVMVYNKG (63 aa)) folds into the R3H domain.

It belongs to the NFX1 family.

It is found in the cytoplasm. The protein localises to the golgi apparatus. The protein resides in the nucleus. Its function is as follows. May play a role in transcription regulation. The polypeptide is FKBP12-associated protein 1 homolog (fap1) (Schizosaccharomyces pombe (strain 972 / ATCC 24843) (Fission yeast)).